A 361-amino-acid chain; its full sequence is Phosphoserine aminotransferase (361 aa).

R42 contacts L-glutamate. Pyridoxal 5'-phosphate contacts are provided by residues 76-77 (AR), W102, T153, D173, and Q196. K197 is modified (N6-(pyridoxal phosphate)lysine). 238–239 (NT) serves as a coordination point for pyridoxal 5'-phosphate.

The protein belongs to the class-V pyridoxal-phosphate-dependent aminotransferase family. SerC subfamily. In terms of assembly, homodimer. Pyridoxal 5'-phosphate serves as cofactor.

The protein localises to the cytoplasm. The enzyme catalyses O-phospho-L-serine + 2-oxoglutarate = 3-phosphooxypyruvate + L-glutamate. It carries out the reaction 4-(phosphooxy)-L-threonine + 2-oxoglutarate = (R)-3-hydroxy-2-oxo-4-phosphooxybutanoate + L-glutamate. The protein operates within amino-acid biosynthesis; L-serine biosynthesis; L-serine from 3-phospho-D-glycerate: step 2/3. Its pathway is cofactor biosynthesis; pyridoxine 5'-phosphate biosynthesis; pyridoxine 5'-phosphate from D-erythrose 4-phosphate: step 3/5. Catalyzes the reversible conversion of 3-phosphohydroxypyruvate to phosphoserine and of 3-hydroxy-2-oxo-4-phosphonooxybutanoate to phosphohydroxythreonine. The polypeptide is Phosphoserine aminotransferase (Yersinia pestis bv. Antiqua (strain Angola)).